The primary structure comprises 428 residues: uncharacterized protein (428 aa).

This is an uncharacterized protein from Treponema pallidum (strain Nichols).